A 416-amino-acid polypeptide reads, in one-letter code: Gamma-glutamyl phosphate reductase (416 aa).

This sequence belongs to the gamma-glutamyl phosphate reductase family.

It is found in the cytoplasm. It catalyses the reaction L-glutamate 5-semialdehyde + phosphate + NADP(+) = L-glutamyl 5-phosphate + NADPH + H(+). It functions in the pathway amino-acid biosynthesis; L-proline biosynthesis; L-glutamate 5-semialdehyde from L-glutamate: step 2/2. Functionally, catalyzes the NADPH-dependent reduction of L-glutamate 5-phosphate into L-glutamate 5-semialdehyde and phosphate. The product spontaneously undergoes cyclization to form 1-pyrroline-5-carboxylate. The polypeptide is Gamma-glutamyl phosphate reductase (Salmonella arizonae (strain ATCC BAA-731 / CDC346-86 / RSK2980)).